We begin with the raw amino-acid sequence, 587 residues long: Zinc finger protein 496 (587 aa).

The segment at 1–40 (MPTALCPRVLAPKESEEPRKMRSPPGENPSPQGELPSPES) is disordered. Residues 11 to 20 (APKESEEPRK) are compositionally biased toward basic and acidic residues. Lysine 13 is covalently cross-linked (Glycyl lysine isopeptide (Lys-Gly) (interchain with G-Cter in SUMO2)). Positions 42 to 124 (RRLFRRFRYQ…AAVEALEREP (83 aa)) constitute an SCAN box domain. Position 185 is a phosphoserine (serine 185). Residues 221–291 (SPFKDMILCF…ELQDLQGKEV (71 aa)) form the KRAB domain. The disordered stretch occupies residues 260 to 282 (PPNDLAAQPDLSQGEENEPRVPE). Serine 299 carries the phosphoserine modification. The segment at 358–399 (SSSGDEDSQHGPYCTEELGSPTEKQRSLPASHRSSTEAGGEV) is disordered. Over residues 389–399 (HRSSTEAGGEV) the composition is skewed to polar residues. A Glycyl lysine isopeptide (Lys-Gly) (interchain with G-Cter in SUMO2) cross-link involves residue lysine 403. Residues 406–428 (YVCPNCGKIFRWRVNFIRHLRSR) form a C2H2-type 1; degenerate zinc finger. C2H2-type zinc fingers lie at residues 435–457 (HECS…LESH) and 463–485 (YRCG…RRIH). Positions 488–513 (PDRLQPVEKREQAASEDADKGPKEPL) are disordered. Lysine 496 is covalently cross-linked (Glycyl lysine isopeptide (Lys-Gly) (interchain with G-Cter in SUMO2)). 2 consecutive C2H2-type zinc fingers follow at residues 522–545 (FQCC…SHFH) and 553–575 (FQCR…ERLH).

This sequence belongs to the krueppel C2H2-type zinc-finger protein family. As to quaternary structure, interacts (via zinc-fingers) with JARID2. Interacts with NSD1.

The protein localises to the nucleus. In terms of biological role, DNA-binding transcription factor that can both act as an activator and a repressor. This Homo sapiens (Human) protein is Zinc finger protein 496 (ZNF496).